The following is a 431-amino-acid chain: Histidine--tRNA ligase (431 aa).

It belongs to the class-II aminoacyl-tRNA synthetase family.

The protein resides in the cytoplasm. It carries out the reaction tRNA(His) + L-histidine + ATP = L-histidyl-tRNA(His) + AMP + diphosphate + H(+). The protein is Histidine--tRNA ligase (hisS) of Pyrococcus horikoshii (strain ATCC 700860 / DSM 12428 / JCM 9974 / NBRC 100139 / OT-3).